The sequence spans 361 residues: 3-dehydroquinate synthase (361 aa).

NAD(+)-binding positions include 71–76 (DGEQYK), 105–109 (GVIGD), 129–130 (TT), lysine 142, and lysine 151. Zn(2+)-binding residues include glutamate 184, histidine 247, and histidine 264.

The protein belongs to the sugar phosphate cyclases superfamily. Dehydroquinate synthase family. It depends on Co(2+) as a cofactor. Requires Zn(2+) as cofactor. NAD(+) serves as cofactor.

Its subcellular location is the cytoplasm. It catalyses the reaction 7-phospho-2-dehydro-3-deoxy-D-arabino-heptonate = 3-dehydroquinate + phosphate. It participates in metabolic intermediate biosynthesis; chorismate biosynthesis; chorismate from D-erythrose 4-phosphate and phosphoenolpyruvate: step 2/7. Functionally, catalyzes the conversion of 3-deoxy-D-arabino-heptulosonate 7-phosphate (DAHP) to dehydroquinate (DHQ). This chain is 3-dehydroquinate synthase, found in Pectobacterium atrosepticum (strain SCRI 1043 / ATCC BAA-672) (Erwinia carotovora subsp. atroseptica).